Here is a 286-residue protein sequence, read N- to C-terminus: Pantothenate synthetase (286 aa).

31-38 (MGALHDGH) serves as a coordination point for ATP. H38 serves as the catalytic Proton donor. (R)-pantoate is bound at residue Q62. Q62 contacts beta-alanine. 148–151 (GKKD) contacts ATP. Q154 serves as a coordination point for (R)-pantoate. ATP contacts are provided by residues V177 and 185 to 188 (KSSR).

It belongs to the pantothenate synthetase family. Homodimer.

It is found in the cytoplasm. It carries out the reaction (R)-pantoate + beta-alanine + ATP = (R)-pantothenate + AMP + diphosphate + H(+). Its pathway is cofactor biosynthesis; (R)-pantothenate biosynthesis; (R)-pantothenate from (R)-pantoate and beta-alanine: step 1/1. Its function is as follows. Catalyzes the condensation of pantoate with beta-alanine in an ATP-dependent reaction via a pantoyl-adenylate intermediate. This Staphylococcus epidermidis (strain ATCC 35984 / DSM 28319 / BCRC 17069 / CCUG 31568 / BM 3577 / RP62A) protein is Pantothenate synthetase.